The sequence spans 303 residues: MKVLLIAGGWSSERDVSLAGARGIEKALRALGHDVTWFDPATSLDGLLEAASSHDFAFINLHGSPGEDGLVQAMLDTAGCPYQGSGPAGSFLALNKAVSKQLLRRHGILTPDWAFLAARPAADWEPGLGYPLFVKPNTGGSSLCLSRVTQPEGLAPALEAVFAHCGEAIVEPAIPGVEVTCGVLGDTALPPILIRPAEGAFFDYTSKYTPGGATELCPAPLPAEVTAHVQDVTLRAHRLLGLRGYSRADYILRDDGALFLLEVNTLPGMTPTSLVPQEAAAIGLDFPALIARLIELGMTAAGR.

The 196-residue stretch at 100-295 (KQLLRRHGIL…FPALIARLIE (196 aa)) folds into the ATP-grasp domain. 127-180 (GLGYPLFVKPNTGGSSLCLSRVTQPEGLAPALEAVFAHCGEAIVEPAIPGVEVT) contributes to the ATP binding site. Mg(2+)-binding residues include aspartate 249, glutamate 262, and asparagine 264.

It belongs to the D-alanine--D-alanine ligase family. Mg(2+) serves as cofactor. Mn(2+) is required as a cofactor.

The protein resides in the cytoplasm. The catalysed reaction is 2 D-alanine + ATP = D-alanyl-D-alanine + ADP + phosphate + H(+). The protein operates within cell wall biogenesis; peptidoglycan biosynthesis. Cell wall formation. The sequence is that of D-alanine--D-alanine ligase from Nitratidesulfovibrio vulgaris (strain DP4) (Desulfovibrio vulgaris).